An 872-amino-acid polypeptide reads, in one-letter code: Bifunctional uridylyltransferase/uridylyl-removing enzyme (872 aa).

The segment at 1-332 (MALPNKVKKL…PKHHQPIIQE (332 aa)) is uridylyltransferase. The interval 333 to 691 (LDRNFERIGN…VSNKAMHGGT (359 aa)) is uridylyl-removing. In terms of domain architecture, HD spans 450–572 (VDEHTHRLIN…VKTERQLDYL (123 aa)). ACT domains follow at residues 692-773 (QVFV…FKKN) and 799-872 (LIEI…AETE).

Belongs to the GlnD family. Mg(2+) is required as a cofactor.

It carries out the reaction [protein-PII]-L-tyrosine + UTP = [protein-PII]-uridylyl-L-tyrosine + diphosphate. The enzyme catalyses [protein-PII]-uridylyl-L-tyrosine + H2O = [protein-PII]-L-tyrosine + UMP + H(+). Uridylyltransferase (UTase) activity is inhibited by glutamine, while glutamine activates uridylyl-removing (UR) activity. Modifies, by uridylylation and deuridylylation, the PII regulatory proteins (GlnB and homologs), in response to the nitrogen status of the cell that GlnD senses through the glutamine level. Under low glutamine levels, catalyzes the conversion of the PII proteins and UTP to PII-UMP and PPi, while under higher glutamine levels, GlnD hydrolyzes PII-UMP to PII and UMP (deuridylylation). Thus, controls uridylylation state and activity of the PII proteins, and plays an important role in the regulation of nitrogen assimilation and metabolism. The sequence is that of Bifunctional uridylyltransferase/uridylyl-removing enzyme from Pseudoalteromonas translucida (strain TAC 125).